Reading from the N-terminus, the 225-residue chain is ATP-dependent dethiobiotin synthetase BioD (225 aa).

13-18 lines the ATP pocket; sequence NVGKTL. Mg(2+) is bound at residue Thr17. The active site involves Lys38. Thr42 is a substrate binding site. ATP contacts are provided by residues Asp55, 116 to 119, 176 to 177, and 205 to 207; these read EGAG, NH, and PWL. Asp55 and Glu116 together coordinate Mg(2+).

It belongs to the dethiobiotin synthetase family. As to quaternary structure, homodimer. Mg(2+) is required as a cofactor.

It localises to the cytoplasm. It catalyses the reaction (7R,8S)-7,8-diammoniononanoate + CO2 + ATP = (4R,5S)-dethiobiotin + ADP + phosphate + 3 H(+). The protein operates within cofactor biosynthesis; biotin biosynthesis; biotin from 7,8-diaminononanoate: step 1/2. Its function is as follows. Catalyzes a mechanistically unusual reaction, the ATP-dependent insertion of CO2 between the N7 and N8 nitrogen atoms of 7,8-diaminopelargonic acid (DAPA, also called 7,8-diammoniononanoate) to form a ureido ring. This Baumannia cicadellinicola subsp. Homalodisca coagulata protein is ATP-dependent dethiobiotin synthetase BioD.